Here is a 197-residue protein sequence, read N- to C-terminus: Putative NADH dehydrogenase/NAD(P)H nitroreductase Lcho_1290 (197 aa).

Belongs to the nitroreductase family. HadB/RutE subfamily. It depends on FMN as a cofactor.

This is Putative NADH dehydrogenase/NAD(P)H nitroreductase Lcho_1290 from Leptothrix cholodnii (strain ATCC 51168 / LMG 8142 / SP-6) (Leptothrix discophora (strain SP-6)).